We begin with the raw amino-acid sequence, 103 residues long: 6-pyruvoyl tetrahydrobiopterin synthase (103 aa).

An N-acetylalanine modification is found at Ala1. His27 contributes to the Zn(2+) binding site. Residues His53 and Glu92 each act as charge relay system in the active site.

This sequence belongs to the PTPS family. As to quaternary structure, homohexamer formed of two homotrimers in a head to head fashion. Requires Zn(2+) as cofactor.

The catalysed reaction is 7,8-dihydroneopterin 3'-triphosphate = 6-pyruvoyl-5,6,7,8-tetrahydropterin + triphosphate + H(+). It participates in cofactor biosynthesis; tetrahydrobiopterin biosynthesis; tetrahydrobiopterin from 7,8-dihydroneopterin triphosphate: step 1/3. Its function is as follows. Involved in the biosynthesis of tetrahydrobiopterin, an essential cofactor of aromatic amino acid hydroxylases. Catalyzes the transformation of 7,8-dihydroneopterin triphosphate into 6-pyruvoyl tetrahydropterin. The sequence is that of 6-pyruvoyl tetrahydrobiopterin synthase (pts) from Salmo salar (Atlantic salmon).